The primary structure comprises 395 residues: S-adenosylmethionine synthase (395 aa).

An ATP-binding site is contributed by histidine 15. Aspartate 17 serves as a coordination point for Mg(2+). Position 43 (glutamate 43) interacts with K(+). The L-methionine site is built by glutamate 56 and glutamine 99. Positions 99-109 are flexible loop; sequence QSPDIAMGVDE. ATP is bound by residues 173-175, 239-240, aspartate 248, 254-255, alanine 271, and lysine 275; these read DGK, RF, and RK. An L-methionine-binding site is contributed by aspartate 248. L-methionine is bound at residue lysine 279.

This sequence belongs to the AdoMet synthase family. Homotetramer; dimer of dimers. Mg(2+) serves as cofactor. The cofactor is K(+).

It localises to the cytoplasm. The catalysed reaction is L-methionine + ATP + H2O = S-adenosyl-L-methionine + phosphate + diphosphate. It participates in amino-acid biosynthesis; S-adenosyl-L-methionine biosynthesis; S-adenosyl-L-methionine from L-methionine: step 1/1. Its function is as follows. Catalyzes the formation of S-adenosylmethionine (AdoMet) from methionine and ATP. The overall synthetic reaction is composed of two sequential steps, AdoMet formation and the subsequent tripolyphosphate hydrolysis which occurs prior to release of AdoMet from the enzyme. The chain is S-adenosylmethionine synthase from Desulforudis audaxviator (strain MP104C).